A 360-amino-acid chain; its full sequence is Peptide chain release factor 1 (360 aa).

The residue at position 235 (Gln235) is an N5-methylglutamine.

Belongs to the prokaryotic/mitochondrial release factor family. Post-translationally, methylated by PrmC. Methylation increases the termination efficiency of RF1.

It localises to the cytoplasm. In terms of biological role, peptide chain release factor 1 directs the termination of translation in response to the peptide chain termination codons UAG and UAA. This Mannheimia succiniciproducens (strain KCTC 0769BP / MBEL55E) protein is Peptide chain release factor 1.